The following is a 237-amino-acid chain: MQTPSENTNAKSDSLDEPGAYLIEENVALPKDIFHSYLSYWIYEAAHCTPVMLLSLVIGVLISIIILFHDNENCVGVSVGFLLIFSGILVIVLILRFGPQISDEDFKCKLLMEIITRKPTVKGKEWRTITYKMNQYLFDNDLWNTPYYFYRDEDCHRYFLSLIKGRTFKKQKESSASNVKDAQSNDETAGTPNEAAESSSFSAGPNFIKLLTKAAEIEQQFQKEYWRQEYPGVDEFF.

Topologically, residues 1 to 47 (MQTPSENTNAKSDSLDEPGAYLIEENVALPKDIFHSYLSYWIYEAAH) are cytoplasmic. Residues 48–68 (CTPVMLLSLVIGVLISIIILF) form a helical membrane-spanning segment. Over 69-74 (HDNENC) the chain is Extracellular. A helical transmembrane segment spans residues 75–95 (VGVSVGFLLIFSGILVIVLIL). Residues 96-237 (RFGPQISDED…QEYPGVDEFF (142 aa)) are Cytoplasmic-facing. Positions 174 to 201 (SSASNVKDAQSNDETAGTPNEAAESSSF) are disordered. Residues 236-237 (FF) are COPII binding.

Belongs to the DUP/COS family. Interacts with PRM9. Binds to SEC23/24 of COPII coated vesicles.

It is found in the membrane. It localises to the endoplasmic reticulum. In terms of biological role, may be involved in endoplasmic reticulum exit trafficking of proteins. This is Pheromone-regulated membrane protein 8 (PRM8) from Saccharomyces cerevisiae (strain ATCC 204508 / S288c) (Baker's yeast).